The sequence spans 1049 residues: Vacuolar membrane protease (1049 aa).

The Cytoplasmic portion of the chain corresponds to 1–11; the sequence is MKCYNPSAFVP. The helical transmembrane segment at 12-32 threads the bilayer; it reads MAVTLVTVIIYLGVFIPLLII. Residues 33–438 lie on the Vacuolar side of the membrane; sequence QETVPSAPDD…TVFAVFKLRT (406 aa). A glycan (N-linked (GlcNAc...) asparagine) is linked at asparagine 50. Positions 114-135 are disordered; it reads DAEAPESVPSPSNSNDGSAERY. A glycan (N-linked (GlcNAc...) asparagine) is linked at asparagine 157. Zn(2+)-binding residues include histidine 221 and aspartate 233. Glutamate 267 (proton acceptor) is an active-site residue. Residues glutamate 268, glutamate 293, and histidine 365 each coordinate Zn(2+). The helical transmembrane segment at 439–459 threads the bilayer; the sequence is LFAWSLTLLIAAPLMLFAVSY. Topologically, residues 460-495 are cytoplasmic; that stretch reads LLNRQDKFYFFAGSIKAKGPEDEPISLGGWRGAFRY. The chain crosses the membrane as a helical span at residues 496–516; the sequence is PITLIITCAITFGCASLINKI. Over 517-526 the chain is Vacuolar; that stretch reads NPMIVYSSPY. A helical membrane pass occupies residues 527–547; it reads SVWSMSASLFFSIFWFIMAGC. Over 548 to 557 the chain is Cytoplasmic; the sequence is NFVRPSALQR. A helical membrane pass occupies residues 558 to 578; that stretch reads GYAFMWLFVFGWIILVAATVY. At 579–585 the chain is on the vacuolar side; it reads EDRFKIS. A helical transmembrane segment spans residues 586–606; that stretch reads GGYLFVFYEAAIFLATLIAIG. The Cytoplasmic portion of the chain corresponds to 607 to 740; that stretch reads EQFALPKKST…LPIWTWLVQY (134 aa). A disordered region spans residues 621-686; it reads SQLDHDGNQD…IGGGAPTQRS (66 aa). Basic and acidic residues predominate over residues 622–633; sequence QLDHDGNQDSHH. Over residues 655–664 the composition is skewed to acidic residues; it reads GQEEDPEDNV. Residues 741–761 form a helical membrane-spanning segment; the sequence is LLVGPFILIVVGQVGLFLVAA. Over 762–773 the chain is Vacuolar; that stretch reads LHQTGTDGSPLL. The helical transmembrane segment at 774 to 794 threads the bilayer; the sequence is LPYLVVAVFSILLLLPVTPFI. Topologically, residues 795–801 are cytoplasmic; it reads HRLTHHM. The chain crosses the membrane as a helical span at residues 802–822; that stretch reads PTFFFLVFIGTLIYNLVAFPF. Topologically, residues 823–1049 are vacuolar; that stretch reads SPNNRYKAYF…LVEGSKRFVV (227 aa). A glycan (N-linked (GlcNAc...) asparagine) is linked at asparagine 914.

Belongs to the peptidase M28 family. It depends on Zn(2+) as a cofactor.

The protein resides in the vacuole membrane. Its function is as follows. May be involved in vacuolar sorting and osmoregulation. The chain is Vacuolar membrane protease from Botryotinia fuckeliana (strain B05.10) (Noble rot fungus).